A 271-amino-acid chain; its full sequence is Insulin-like growth factor-binding protein 5 (271 aa).

The signal sequence occupies residues 1 to 19; it reads MVISVVLLLLAACAVPAQG. Positions 22 to 102 constitute an IGFBP N-terminal domain; sequence SFVHCEPCDE…LHGRGVCLNE (81 aa). 6 disulfides stabilise this stretch: cysteine 26-cysteine 52, cysteine 29-cysteine 54, cysteine 37-cysteine 55, cysteine 44-cysteine 58, cysteine 66-cysteine 79, and cysteine 73-cysteine 99. A compositionally biased stretch (basic and acidic residues) spans 109–121; that stretch reads TKIERDSREHEEP. A disordered region spans residues 109-129; it reads TKIERDSREHEEPTTSEMAEE. Serine 115 carries the phosphoserine modification. One can recognise a Thyroglobulin type-1 domain in the interval 188–262; it reads QGPCRRHMEA…MEYVDGDFQC (75 aa). 3 disulfides stabilise this stretch: cysteine 191–cysteine 218, cysteine 229–cysteine 240, and cysteine 242–cysteine 262.

Interacts with IGF1; this interaction enhances the growth stimulatory effects of IGF1 on fibroblasts. Interacts with CAV1; this interaction allows trafficking of IGFBP5 from the plasma membrane to the nucleus. Interacts with NCL; this interaction is necessary for IGFBP5 localization to the nucleus. As to expression, mostly in kidney.

Its subcellular location is the secreted. It is found in the cytoplasm. The protein localises to the nucleus. Its function is as follows. Multifunctional protein that plays a critical role in regulating the availability of IGFs to their receptors and thereby regulates IGF-mediated cellular processes including proliferation, differentiation, and apoptosis in a cell-type specific manner. Increases the cell proliferation of osteoblasts, intestinal smooth muscle cells and neuroblastoma cells. Enhances adhesion and survival of epithelial cells but decreases adhesion of mesenchymal cells. Once secreted, acts as a major mediator of mTORC1-dependent feedback inhibition of IGF1 signaling. Also plays a role in the induction of extracellular matrix (ECM) production and deposition independently of its nuclear translocation and binding to IGFs. Acts itself as a growth factor that can act independently of IGFs to regulate bone formation. Acts as a ligand for the ROR1 receptor which triggers formation of ROR1/HER2 heterodimer to enhance CREB oncogenic signaling. The protein is Insulin-like growth factor-binding protein 5 (Igfbp5) of Rattus norvegicus (Rat).